A 266-amino-acid chain; its full sequence is DNA-directed RNA polymerase subunit Rpo3 (266 aa).

Cysteine 205, cysteine 208, and cysteine 211 together coordinate [3Fe-4S] cluster.

This sequence belongs to the archaeal Rpo3/eukaryotic RPB3 RNA polymerase subunit family. As to quaternary structure, part of the RNA polymerase complex. The cofactor is [3Fe-4S] cluster.

The protein localises to the cytoplasm. It catalyses the reaction RNA(n) + a ribonucleoside 5'-triphosphate = RNA(n+1) + diphosphate. In terms of biological role, DNA-dependent RNA polymerase (RNAP) catalyzes the transcription of DNA into RNA using the four ribonucleoside triphosphates as substrates. This is DNA-directed RNA polymerase subunit Rpo3 from Methanosarcina mazei (strain ATCC BAA-159 / DSM 3647 / Goe1 / Go1 / JCM 11833 / OCM 88) (Methanosarcina frisia).